A 466-amino-acid polypeptide reads, in one-letter code: 3-isopropylmalate dehydratase large subunit (466 aa).

Residues Cys347, Cys407, and Cys410 each coordinate [4Fe-4S] cluster.

It belongs to the aconitase/IPM isomerase family. LeuC type 1 subfamily. As to quaternary structure, heterodimer of LeuC and LeuD. The cofactor is [4Fe-4S] cluster.

The enzyme catalyses (2R,3S)-3-isopropylmalate = (2S)-2-isopropylmalate. It functions in the pathway amino-acid biosynthesis; L-leucine biosynthesis; L-leucine from 3-methyl-2-oxobutanoate: step 2/4. Catalyzes the isomerization between 2-isopropylmalate and 3-isopropylmalate, via the formation of 2-isopropylmaleate. This Salmonella paratyphi A (strain ATCC 9150 / SARB42) protein is 3-isopropylmalate dehydratase large subunit.